The chain runs to 142 residues: Ribosome maturation factor RimP (142 aa).

Belongs to the RimP family.

The protein localises to the cytoplasm. Functionally, required for maturation of 30S ribosomal subunits. The chain is Ribosome maturation factor RimP from Sulfurovum sp. (strain NBC37-1).